Consider the following 199-residue polypeptide: Protein MA_3591 (199 aa).

Residues 5–196 (TEGRVAVKLA…EKEPEGEVIE (192 aa)) enclose the AMMECR1 domain.

The polypeptide is Protein MA_3591 (Methanosarcina acetivorans (strain ATCC 35395 / DSM 2834 / JCM 12185 / C2A)).